A 692-amino-acid polypeptide reads, in one-letter code: Hexamerin-1.1 (692 aa).

The first 18 residues, 1-18, serve as a signal peptide directing secretion; it reads MKLLILAVAISLAVLASG. N-linked (GlcNAc...) asparagine glycosylation is present at asparagine 203.

Belongs to the hemocyanin family. Homohexamer. In terms of tissue distribution, larval fat body.

It is found in the secreted. The protein resides in the extracellular space. Functionally, larval storage protein (LSP) which may serve as a store of amino acids for synthesis of adult proteins. The polypeptide is Hexamerin-1.1 (HexA) (Anopheles gambiae (African malaria mosquito)).